Reading from the N-terminus, the 171-residue chain is uncharacterized protein (171 aa).

Positions 1–20 are cleaved as a signal peptide; the sequence is MRRVLFSCFCGLLWSSSGWA. A disulfide bridge links cysteine 40 with cysteine 80.

The protein belongs to the fimbrial protein family.

It localises to the fimbrium. Its function is as follows. Part of the sfmACDHF fimbrial operon. Could contribute to adhesion to various surfaces in specific environmental niches. Increases adhesion to eukaryotic T24 bladder epithelial cells in the absence of fim genes. This is an uncharacterized protein from Escherichia coli (strain K12).